Consider the following 244-residue polypeptide: 7-cyano-7-deazaguanine synthase (244 aa).

14-24 (FSGGQDSATCV) provides a ligand contact to ATP. Residues C202, C217, C220, and C223 each contribute to the Zn(2+) site.

The protein belongs to the QueC family. Requires Zn(2+) as cofactor.

The catalysed reaction is 7-carboxy-7-deazaguanine + NH4(+) + ATP = 7-cyano-7-deazaguanine + ADP + phosphate + H2O + H(+). It functions in the pathway purine metabolism; 7-cyano-7-deazaguanine biosynthesis. Catalyzes the ATP-dependent conversion of 7-carboxy-7-deazaguanine (CDG) to 7-cyano-7-deazaguanine (preQ(0)). This Burkholderia vietnamiensis (strain G4 / LMG 22486) (Burkholderia cepacia (strain R1808)) protein is 7-cyano-7-deazaguanine synthase.